Reading from the N-terminus, the 211-residue chain is tRNA (guanine-N(7)-)-methyltransferase (211 aa).

4 residues coordinate S-adenosyl-L-methionine: Asp-40, Glu-65, Asn-92, and Asp-117. The active site involves Asp-117. Lys-121 serves as a coordination point for substrate. Residues 123–128 (RHNKRR) are interaction with RNA. Position 153 (Asp-153) interacts with substrate.

Belongs to the class I-like SAM-binding methyltransferase superfamily. TrmB family.

The enzyme catalyses guanosine(46) in tRNA + S-adenosyl-L-methionine = N(7)-methylguanosine(46) in tRNA + S-adenosyl-L-homocysteine. It functions in the pathway tRNA modification; N(7)-methylguanine-tRNA biosynthesis. Its function is as follows. Catalyzes the formation of N(7)-methylguanine at position 46 (m7G46) in tRNA. This is tRNA (guanine-N(7)-)-methyltransferase from Synechocystis sp. (strain ATCC 27184 / PCC 6803 / Kazusa).